An 89-amino-acid chain; its full sequence is Small ribosomal subunit protein uS15 (89 aa).

Belongs to the universal ribosomal protein uS15 family. As to quaternary structure, part of the 30S ribosomal subunit. Forms a bridge to the 50S subunit in the 70S ribosome, contacting the 23S rRNA.

Its function is as follows. One of the primary rRNA binding proteins, it binds directly to 16S rRNA where it helps nucleate assembly of the platform of the 30S subunit by binding and bridging several RNA helices of the 16S rRNA. In terms of biological role, forms an intersubunit bridge (bridge B4) with the 23S rRNA of the 50S subunit in the ribosome. This chain is Small ribosomal subunit protein uS15, found in Roseobacter denitrificans (strain ATCC 33942 / OCh 114) (Erythrobacter sp. (strain OCh 114)).